The primary structure comprises 71 residues: Large ribosomal subunit protein eL38 (71 aa).

Belongs to the eukaryotic ribosomal protein eL38 family.

The sequence is that of Large ribosomal subunit protein eL38 (RpL38) from Ixodes scapularis (Black-legged tick).